Consider the following 403-residue polypeptide: Dual-specificity RNA methyltransferase RlmN (403 aa).

Glu-126 serves as the catalytic Proton acceptor. The 244-residue stretch at 132 to 375 folds into the Radical SAM core domain; sequence ETDRGTLCVS…VRTPRGRDIL (244 aa). Cys-139 and Cys-378 form a disulfide bridge. [4Fe-4S] cluster is bound by residues Cys-146, Cys-150, and Cys-153. S-adenosyl-L-methionine-binding positions include 204-205, Ser-236, 258-260, and Asn-335; these read GE and SLH. The S-methylcysteine intermediate role is filled by Cys-378.

This sequence belongs to the radical SAM superfamily. RlmN family. The cofactor is [4Fe-4S] cluster.

The protein resides in the cytoplasm. The catalysed reaction is adenosine(2503) in 23S rRNA + 2 reduced [2Fe-2S]-[ferredoxin] + 2 S-adenosyl-L-methionine = 2-methyladenosine(2503) in 23S rRNA + 5'-deoxyadenosine + L-methionine + 2 oxidized [2Fe-2S]-[ferredoxin] + S-adenosyl-L-homocysteine. The enzyme catalyses adenosine(37) in tRNA + 2 reduced [2Fe-2S]-[ferredoxin] + 2 S-adenosyl-L-methionine = 2-methyladenosine(37) in tRNA + 5'-deoxyadenosine + L-methionine + 2 oxidized [2Fe-2S]-[ferredoxin] + S-adenosyl-L-homocysteine. Specifically methylates position 2 of adenine 2503 in 23S rRNA and position 2 of adenine 37 in tRNAs. m2A2503 modification seems to play a crucial role in the proofreading step occurring at the peptidyl transferase center and thus would serve to optimize ribosomal fidelity. The polypeptide is Dual-specificity RNA methyltransferase RlmN (Bradyrhizobium sp. (strain ORS 278)).